We begin with the raw amino-acid sequence, 337 residues long: DNA-directed RNA polymerase subunit alpha (337 aa).

The interval 1–233 (MIREKVTVST…DLFIPFLHME (233 aa)) is alpha N-terminal domain (alpha-NTD). Positions 266-337 (KLALKSIFID…FAIDLPKNQF (72 aa)) are alpha C-terminal domain (alpha-CTD).

It belongs to the RNA polymerase alpha chain family. In plastids the minimal PEP RNA polymerase catalytic core is composed of four subunits: alpha, beta, beta', and beta''. When a (nuclear-encoded) sigma factor is associated with the core the holoenzyme is formed, which can initiate transcription.

It is found in the plastid. The protein localises to the chloroplast. The catalysed reaction is RNA(n) + a ribonucleoside 5'-triphosphate = RNA(n+1) + diphosphate. Its function is as follows. DNA-dependent RNA polymerase catalyzes the transcription of DNA into RNA using the four ribonucleoside triphosphates as substrates. The sequence is that of DNA-directed RNA polymerase subunit alpha from Ipomoea purpurea (Common morning glory).